The chain runs to 364 residues: Transposase for insertion sequence element IS1111A (364 aa).

Belongs to the transposase IS1111A/IS1328/IS1533 family.

Functionally, required for the transposition of the insertion element. This Coxiella burnetii (strain RSA 493 / Nine Mile phase I) protein is Transposase for insertion sequence element IS1111A.